The primary structure comprises 452 residues: Acetyl-CoA decarbonylase/synthase complex subunit delta (452 aa).

The protein belongs to the CdhD family. Heterodimer of delta and gamma chains. The ACDS complex is made up of alpha, epsilon, beta, gamma and delta chains with a probable stoichiometry of (alpha(2)epsilon(2))(4)-beta(8)-(gamma(1)delta(1))(8).

In terms of biological role, part of a complex that catalyzes the reversible cleavage of acetyl-CoA, allowing autotrophic growth from CO(2). Probably maintains the overall quaternary structure of the ACDS complex. The chain is Acetyl-CoA decarbonylase/synthase complex subunit delta from Archaeoglobus fulgidus (strain ATCC 49558 / DSM 4304 / JCM 9628 / NBRC 100126 / VC-16).